The sequence spans 707 residues: Eomesodermin homolog (707 aa).

Gly residues predominate over residues 27–42 (GGGGGGGGGGGGGGGS). Positions 27 to 125 (GGGGGGGGGG…GSPCAEEELP (99 aa)) are disordered. Residues 73 to 93 (AGSAEPAGAGAGAPAAMLSDA) are compositionally biased toward low complexity. Serine 117 is subject to Phosphoserine. The T-box DNA-binding region spans 278-458 (LWLKFHRHQT…HNPFAKGFRD (181 aa)). The residue at position 473 (threonine 473) is a Phosphothreonine. A required for transcription activation region spans residues 592–707 (AMAGWGGRGA…GAYYAFYTSP (116 aa)). The interval 642 to 689 (TPPSIKSLDSSDSGVYNSACKRKRLSPSTPSNGNSPPIKCEDINTEEY) is disordered. Residues 648–657 (SLDSSDSGVY) show a composition bias toward polar residues. Residues 667–678 (SPSTPSNGNSPP) show a composition bias toward low complexity. A compositionally biased stretch (basic and acidic residues) spans 680–689 (KCEDINTEEY).

As to expression, expressed in CD8+ T-cells.

It localises to the nucleus. In terms of biological role, functions as a transcriptional activator playing a crucial role during development. Functions in trophoblast differentiation and later in gastrulation, regulating both mesoderm delamination and endoderm specification. Plays a role in brain development being required for the specification and the proliferation of the intermediate progenitor cells and their progeny in the cerebral cortex. Required for differentiation and migration of unipolar dendritic brush cells. Also involved in the differentiation of CD8+ T-cells during immune response regulating the expression of lytic effector genes. The protein is Eomesodermin homolog (Eomes) of Mus musculus (Mouse).